The primary structure comprises 436 residues: Gustatory receptor for sugar taste 61a (436 aa).

The Cytoplasmic segment spans residues 1–78 (MSRTSDDIRK…PQDVKFKVRS (78 aa)). A helical transmembrane segment spans residues 79 to 99 (IGLAVTGLFLLLGGMKTLVGA). At 100 to 111 (NILFTEGLNAKN) the chain is on the extracellular side. A helical membrane pass occupies residues 112-132 (IVGLVFLIVGMVNWLNFVGFA). Topologically, residues 133 to 164 (RSWSHIMLPWSSVDILMLFPPYKRGKRSLRSK) are cytoplasmic. The chain crosses the membrane as a helical span at residues 165 to 185 (VNVLALSVVVLAVGDHMLYYA). Topologically, residues 186–214 (SGYCSYSMHILQCHTNHSRITFGLYLEKE) are extracellular. The N-linked (GlcNAc...) asparagine glycan is linked to asparagine 201. The helical transmembrane segment at 215-235 (FSDIMFIMPFNIFSMCYGFWL) threads the bilayer. At 236–237 (NG) the chain is on the cytoplasmic side. A helical transmembrane segment spans residues 238–258 (AFTFLWNFMDIFIVMTSIGLA). Residues 259-304 (QRFQQFAARVGALEGRHVPEALWYDIRRDHIRLCELASLVEASMSN) are Extracellular-facing. A helical membrane pass occupies residues 305 to 325 (IVFVSCANNVYVICNQALAIF). At 326–334 (TKLRHPINY) the chain is on the cytoplasmic side. Residues 335–355 (VYFWYSLIFLLARTSLVFMTA) traverse the membrane as a helical segment. Topologically, residues 356–436 (SKIHDASLLP…AKSHKGLRCA (81 aa)) are extracellular.

The protein belongs to the insect chemoreceptor superfamily. Gustatory receptor (GR) family. Gr5a subfamily. In terms of tissue distribution, expressed in sweet sensing neurons of classical chemosensory sensilla, but also in two supersensitive neurons of atypical taste sensilla.

It is found in the cell membrane. In terms of biological role, one of the few identified sugar gustatory receptors identified so far with glucose being its primary ligand and which mediates acceptance behavior. The protein is Gustatory receptor for sugar taste 61a (Gr61a) of Drosophila melanogaster (Fruit fly).